The following is a 102-amino-acid chain: ATP-dependent Clp protease adapter protein ClpS (102 aa).

This sequence belongs to the ClpS family. Binds to the N-terminal domain of the chaperone ClpA.

Involved in the modulation of the specificity of the ClpAP-mediated ATP-dependent protein degradation. The polypeptide is ATP-dependent Clp protease adapter protein ClpS (Shewanella putrefaciens (strain CN-32 / ATCC BAA-453)).